Reading from the N-terminus, the 130-residue chain is Small ribosomal subunit protein uS8 (130 aa).

The protein belongs to the universal ribosomal protein uS8 family. Part of the 30S ribosomal subunit.

One of the primary rRNA binding proteins, it binds directly to 16S rRNA central domain where it helps coordinate assembly of the platform of the 30S subunit. This chain is Small ribosomal subunit protein uS8, found in Pyrobaculum islandicum (strain DSM 4184 / JCM 9189 / GEO3).